The following is a 397-amino-acid chain: GTPase Obg (397 aa).

The Obg domain occupies 1–159 (MKFVDEATII…RNLRLELKVL (159 aa)). The disordered stretch occupies residues 128–148 (TRFKSSVNRAPRQTSKGSEGE). The span at 129–144 (RFKSSVNRAPRQTSKG) shows a compositional bias: polar residues. Positions 160-333 (ADVGLLGLPN…LVQAVMRWIE (174 aa)) constitute an OBG-type G domain. GTP contacts are provided by residues 166–173 (GLPNAGKS), 191–195 (FTTLV), 213–216 (DIPG), 283–286 (NKVD), and 314–316 (SAL). The Mg(2+) site is built by S173 and T193. Acidic residues predominate over residues 336-347 (AEQEADNPDFAE). The interval 336-397 (AEQEADNPDF…YDVEVVYAPE (62 aa)) is disordered. The span at 349–370 (EAARRRRMDEEARQKIEADRQA) shows a compositional bias: basic and acidic residues. Acidic residues predominate over residues 378 to 390 (DDDDDFDDDDYDV).

Belongs to the TRAFAC class OBG-HflX-like GTPase superfamily. OBG GTPase family. Monomer. Mg(2+) is required as a cofactor.

It is found in the cytoplasm. Its function is as follows. An essential GTPase which binds GTP, GDP and possibly (p)ppGpp with moderate affinity, with high nucleotide exchange rates and a fairly low GTP hydrolysis rate. Plays a role in control of the cell cycle, stress response, ribosome biogenesis and in those bacteria that undergo differentiation, in morphogenesis control. The sequence is that of GTPase Obg from Marinobacter nauticus (strain ATCC 700491 / DSM 11845 / VT8) (Marinobacter aquaeolei).